Here is a 715-residue protein sequence, read N- to C-terminus: Putative macrophage stimulating 1-like protein (715 aa).

A signal peptide spans 1–20; sequence MAPAPVTLLAPGAASSMSCS. The PAN domain maps to 21–110; sequence QPGQRSPSND…GRCDLFQEKG (90 aa). Kringle domains are found at residues 63–156, 160–238, 252–345, and 353–464; these read GRCG…IKSC, ACVW…LPRC, SCFR…IRRC, and DCYH…LRRC. Intrachain disulfides connect C127–C151, C161–C238, C182–C221, C210–C233, C253–C345, C316–C339, C354–C464, C375–C447, C511–C527, C606–C671, C636–C650, and C661–C689. Residues 488-713 enclose the Peptidase S1 domain; it reads VAGGHPGNSP…FVDWIHKVMR (226 aa).

The protein belongs to the peptidase S1 family. Plasminogen subfamily.

It localises to the secreted. This is Putative macrophage stimulating 1-like protein (MST1L) from Homo sapiens (Human).